Consider the following 470-residue polypeptide: ATP synthase subunit beta (470 aa).

Residue 155–162 coordinates ATP; the sequence is GGAGVGKT.

Belongs to the ATPase alpha/beta chains family. In terms of assembly, F-type ATPases have 2 components, CF(1) - the catalytic core - and CF(0) - the membrane proton channel. CF(1) has five subunits: alpha(3), beta(3), gamma(1), delta(1), epsilon(1). CF(0) has three main subunits: a(1), b(2) and c(9-12). The alpha and beta chains form an alternating ring which encloses part of the gamma chain. CF(1) is attached to CF(0) by a central stalk formed by the gamma and epsilon chains, while a peripheral stalk is formed by the delta and b chains.

It is found in the cell membrane. It carries out the reaction ATP + H2O + 4 H(+)(in) = ADP + phosphate + 5 H(+)(out). Functionally, produces ATP from ADP in the presence of a proton gradient across the membrane. The catalytic sites are hosted primarily by the beta subunits. This chain is ATP synthase subunit beta, found in Staphylococcus aureus (strain MW2).